We begin with the raw amino-acid sequence, 884 residues long: Valine--tRNA ligase (884 aa).

The 'HIGH' region signature appears at 46-56; it reads PNVTGKLHLGH. Positions 520–524 match the 'KMSKS' region motif; sequence KMSKS. Residue Lys523 coordinates ATP. A coiled-coil region spans residues 809-844; the sequence is LADLLNVEEELARLEKELAKWQKELNMVGKKLSNER.

It belongs to the class-I aminoacyl-tRNA synthetase family. ValS type 1 subfamily. As to quaternary structure, monomer.

It is found in the cytoplasm. The enzyme catalyses tRNA(Val) + L-valine + ATP = L-valyl-tRNA(Val) + AMP + diphosphate. In terms of biological role, catalyzes the attachment of valine to tRNA(Val). As ValRS can inadvertently accommodate and process structurally similar amino acids such as threonine, to avoid such errors, it has a 'posttransfer' editing activity that hydrolyzes mischarged Thr-tRNA(Val) in a tRNA-dependent manner. The protein is Valine--tRNA ligase of Streptococcus agalactiae serotype III (strain NEM316).